Reading from the N-terminus, the 184-residue chain is dITP/XTP pyrophosphatase (184 aa).

8-13 (TGNKGK) provides a ligand contact to substrate. 2 residues coordinate Mg(2+): Glu37 and Asp66. Asp66 acts as the Proton acceptor in catalysis. Residues Ser67, 142–145 (FGYD), Lys163, and 168–169 (HR) contribute to the substrate site.

Belongs to the HAM1 NTPase family. Homodimer. Mg(2+) is required as a cofactor.

It carries out the reaction XTP + H2O = XMP + diphosphate + H(+). The catalysed reaction is dITP + H2O = dIMP + diphosphate + H(+). It catalyses the reaction ITP + H2O = IMP + diphosphate + H(+). Functionally, pyrophosphatase that catalyzes the hydrolysis of nucleoside triphosphates to their monophosphate derivatives, with a high preference for the non-canonical purine nucleotides XTP (xanthosine triphosphate), dITP (deoxyinosine triphosphate) and ITP. Seems to function as a house-cleaning enzyme that removes non-canonical purine nucleotides from the nucleotide pool, thus preventing their incorporation into DNA/RNA and avoiding chromosomal lesions. The protein is dITP/XTP pyrophosphatase of Methanosarcina acetivorans (strain ATCC 35395 / DSM 2834 / JCM 12185 / C2A).